The chain runs to 544 residues: Chaperonin GroEL (544 aa).

Residues 29-32 (TLGP), 86-90 (DGTTT), Gly-413, 476-478 (NAA), and Asp-492 contribute to the ATP site.

Belongs to the chaperonin (HSP60) family. In terms of assembly, forms a cylinder of 14 subunits composed of two heptameric rings stacked back-to-back. Interacts with the co-chaperonin GroES.

It localises to the cytoplasm. The enzyme catalyses ATP + H2O + a folded polypeptide = ADP + phosphate + an unfolded polypeptide.. In terms of biological role, together with its co-chaperonin GroES, plays an essential role in assisting protein folding. The GroEL-GroES system forms a nano-cage that allows encapsulation of the non-native substrate proteins and provides a physical environment optimized to promote and accelerate protein folding. The sequence is that of Chaperonin GroEL from Bacillus velezensis (strain DSM 23117 / BGSC 10A6 / LMG 26770 / FZB42) (Bacillus amyloliquefaciens subsp. plantarum).